We begin with the raw amino-acid sequence, 825 residues long: Penicillin-binding protein 1A (825 aa).

The Cytoplasmic segment spans residues 1–6 (MKFIKR). A helical; Signal-anchor for type II membrane protein transmembrane segment spans residues 7–27 (LLVFSLICIILGVTTIFGFYF). Residues 28–825 (YVKSDLPDVA…YSTSSGEELF (798 aa)) lie on the Periplasmic side of the membrane. Residues 48–216 (MQVFSQDGKL…STMNPIYSVE (169 aa)) are transglycosylase. The Proton donor; for transglycosylase activity role is filled by glutamate 86. Residues 413 to 752 (PRTQDGAITA…GKTALPAWVE (340 aa)) form a transpeptidase region. Serine 471 functions as the Acyl-ester intermediate; for transpeptidase activity in the catalytic mechanism.

The protein in the N-terminal section; belongs to the glycosyltransferase 51 family. In the C-terminal section; belongs to the transpeptidase family.

It is found in the cell inner membrane. It catalyses the reaction [GlcNAc-(1-&gt;4)-Mur2Ac(oyl-L-Ala-gamma-D-Glu-L-Lys-D-Ala-D-Ala)](n)-di-trans,octa-cis-undecaprenyl diphosphate + beta-D-GlcNAc-(1-&gt;4)-Mur2Ac(oyl-L-Ala-gamma-D-Glu-L-Lys-D-Ala-D-Ala)-di-trans,octa-cis-undecaprenyl diphosphate = [GlcNAc-(1-&gt;4)-Mur2Ac(oyl-L-Ala-gamma-D-Glu-L-Lys-D-Ala-D-Ala)](n+1)-di-trans,octa-cis-undecaprenyl diphosphate + di-trans,octa-cis-undecaprenyl diphosphate + H(+). The enzyme catalyses Preferential cleavage: (Ac)2-L-Lys-D-Ala-|-D-Ala. Also transpeptidation of peptidyl-alanyl moieties that are N-acyl substituents of D-alanine.. It functions in the pathway cell wall biogenesis; peptidoglycan biosynthesis. Cell wall formation. Synthesis of cross-linked peptidoglycan from the lipid intermediates. The enzyme has a penicillin-insensitive transglycosylase N-terminal domain (formation of linear glycan strands) and a penicillin-sensitive transpeptidase C-terminal domain (cross-linking of the peptide subunits). This Vibrio cholerae serotype O1 (strain ATCC 39315 / El Tor Inaba N16961) protein is Penicillin-binding protein 1A (mrcA).